We begin with the raw amino-acid sequence, 165 residues long: ATP synthase subunit b (165 aa).

A helical transmembrane segment spans residues 11-31 (LIFWTIVNFLLLVFLLGKFAW).

It belongs to the ATPase B chain family. As to quaternary structure, F-type ATPases have 2 components, F(1) - the catalytic core - and F(0) - the membrane proton channel. F(1) has five subunits: alpha(3), beta(3), gamma(1), delta(1), epsilon(1). F(0) has three main subunits: a(1), b(2) and c(10-14). The alpha and beta chains form an alternating ring which encloses part of the gamma chain. F(1) is attached to F(0) by a central stalk formed by the gamma and epsilon chains, while a peripheral stalk is formed by the delta and b chains.

The protein localises to the cell membrane. Functionally, f(1)F(0) ATP synthase produces ATP from ADP in the presence of a proton or sodium gradient. F-type ATPases consist of two structural domains, F(1) containing the extramembraneous catalytic core and F(0) containing the membrane proton channel, linked together by a central stalk and a peripheral stalk. During catalysis, ATP synthesis in the catalytic domain of F(1) is coupled via a rotary mechanism of the central stalk subunits to proton translocation. In terms of biological role, component of the F(0) channel, it forms part of the peripheral stalk, linking F(1) to F(0). The chain is ATP synthase subunit b from Elusimicrobium minutum (strain Pei191).